Here is a 229-residue protein sequence, read N- to C-terminus: Ribonuclease 3 (229 aa).

Residues 3–125 form the RNase III domain; that stretch reads VNALQEKLGY…LIGGIFLDSN (123 aa). Glutamate 38 provides a ligand contact to Mg(2+). The active site involves aspartate 42. Asparagine 111 and glutamate 114 together coordinate Mg(2+). The active site involves glutamate 114. In terms of domain architecture, DRBM spans 155–225; sequence DPKTRLQEYM…AAKVLEALEH (71 aa).

This sequence belongs to the ribonuclease III family. Homodimer. It depends on Mg(2+) as a cofactor.

It is found in the cytoplasm. The catalysed reaction is Endonucleolytic cleavage to 5'-phosphomonoester.. Functionally, digests double-stranded RNA. Involved in the processing of primary rRNA transcript to yield the immediate precursors to the large and small rRNAs (23S and 16S). Processes some mRNAs, and tRNAs when they are encoded in the rRNA operon. Processes pre-crRNA and tracrRNA of type II CRISPR loci if present in the organism. This chain is Ribonuclease 3, found in Blochmanniella pennsylvanica (strain BPEN).